The primary structure comprises 473 residues: Photosystem II CP43 reaction center protein (473 aa).

Residues 1–14 (MKILYSLRRFYHVE) constitute a propeptide that is removed on maturation. The residue at position 15 (threonine 15) is an N-acetylthreonine. The residue at position 15 (threonine 15) is a Phosphothreonine. A run of 5 helical transmembrane segments spans residues 69 to 93 (LFEV…PHLA), 134 to 155 (LLGP…KDRN), 178 to 200 (KALY…RKIT), 255 to 275 (KPFA…LSYS), and 291 to 312 (WFNN…ASQA). Glutamate 367 is a binding site for [CaMn4O5] cluster. Residues 447 to 471 (RARAAAAGFEKGIDRDLEPVLYMNP) traverse the membrane as a helical segment.

It belongs to the PsbB/PsbC family. PsbC subfamily. In terms of assembly, PSII is composed of 1 copy each of membrane proteins PsbA, PsbB, PsbC, PsbD, PsbE, PsbF, PsbH, PsbI, PsbJ, PsbK, PsbL, PsbM, PsbT, PsbX, PsbY, PsbZ, Psb30/Ycf12, at least 3 peripheral proteins of the oxygen-evolving complex and a large number of cofactors. It forms dimeric complexes. Binds multiple chlorophylls and provides some of the ligands for the Ca-4Mn-5O cluster of the oxygen-evolving complex. It may also provide a ligand for a Cl- that is required for oxygen evolution. PSII binds additional chlorophylls, carotenoids and specific lipids. is required as a cofactor.

Its subcellular location is the plastid. The protein resides in the chloroplast thylakoid membrane. Its function is as follows. One of the components of the core complex of photosystem II (PSII). It binds chlorophyll and helps catalyze the primary light-induced photochemical processes of PSII. PSII is a light-driven water:plastoquinone oxidoreductase, using light energy to abstract electrons from H(2)O, generating O(2) and a proton gradient subsequently used for ATP formation. The polypeptide is Photosystem II CP43 reaction center protein (Hordeum vulgare (Barley)).